The chain runs to 112 residues: Transcriptional regulator ClgR (112 aa).

One can recognise an HTH cro/C1-type domain in the interval 13–67 (LRGARMSQGRTLREVSDSARVSLGYLSEIERGRKEPSSELLSAICTALQLPLSVV). A DNA-binding region (H-T-H motif) is located at residues 24–43 (LREVSDSARVSLGYLSEIER).

Its function is as follows. Key stress-response regulator that plays an important role in multiple regulatory networks in response to different stress conditions. Required to manage host-derived stress during infection. Plays a role during hypoxia and reaeration. Controls the expression of many genes involved in heat shock, virulence, lipid metabolism, transport or regulation, including clpP1, clpP2, clpC1, hsp, groES, otsA, pknD, prcA and prcB. May function by protecting intracellular redox potential and by inducing the expression of trehalose, a constituent of cell walls that is important for defense against cell-surface and oxidative stress. Also performs different functions during stress response and is important for the pathogenicity of M.tuberculosis in vivo, regardless of the induction of the Clp proteolytic pathway. May directly activate SigE and/or SigH. This is Transcriptional regulator ClgR (clgR) from Mycobacterium tuberculosis (strain CDC 1551 / Oshkosh).